Consider the following 225-residue polypeptide: PKHD-type hydroxylase YbiX (225 aa).

A Fe2OG dioxygenase domain is found at 78–177; the sequence is TLSTPLFNRY…RVASFMWIQS (100 aa). Residues His-96, Asp-98, and His-158 each coordinate Fe cation. Arg-168 lines the 2-oxoglutarate pocket.

Requires Fe(2+) as cofactor. It depends on L-ascorbate as a cofactor.

The chain is PKHD-type hydroxylase YbiX from Escherichia coli (strain SMS-3-5 / SECEC).